A 248-amino-acid polypeptide reads, in one-letter code: Membrane-spanning 4-domains subfamily A member 6A (248 aa).

The Cytoplasmic portion of the chain corresponds to M1–K46. The helical transmembrane segment at V47–A67 threads the bilayer. Residues S68 to N84 lie on the Extracellular side of the membrane. Residues S85–T105 traverse the membrane as a helical segment. Residues E106 to S116 are Cytoplasmic-facing. Residues S117 to V137 traverse the membrane as a helical segment. At K138–T185 the chain is on the extracellular side. Residues L186–L206 form a helical membrane-spanning segment. Topologically, residues R207 to S248 are cytoplasmic.

It belongs to the MS4A family. In terms of tissue distribution, variable expression in some B-cell, myelomonocytic, and erythroleukemia cell lines.

The protein resides in the membrane. Functionally, may be involved in signal transduction as a component of a multimeric receptor complex. The chain is Membrane-spanning 4-domains subfamily A member 6A (MS4A6A) from Homo sapiens (Human).